The sequence spans 364 residues: Chorismate synthase (364 aa).

Arg-48 contacts NADP(+). Residues 131–133, 243–244, Gly-288, 303–307, and Arg-329 each bind FMN; these read RSS, NA, and KPTSS.

Belongs to the chorismate synthase family. Homotetramer. Requires FMNH2 as cofactor.

It catalyses the reaction 5-O-(1-carboxyvinyl)-3-phosphoshikimate = chorismate + phosphate. The protein operates within metabolic intermediate biosynthesis; chorismate biosynthesis; chorismate from D-erythrose 4-phosphate and phosphoenolpyruvate: step 7/7. Catalyzes the anti-1,4-elimination of the C-3 phosphate and the C-6 proR hydrogen from 5-enolpyruvylshikimate-3-phosphate (EPSP) to yield chorismate, which is the branch point compound that serves as the starting substrate for the three terminal pathways of aromatic amino acid biosynthesis. This reaction introduces a second double bond into the aromatic ring system. The polypeptide is Chorismate synthase (Brucella abortus (strain S19)).